Consider the following 729-residue polypeptide: Catalase-peroxidase (729 aa).

The interval 1 to 20 is disordered; it reads MHNGSNGSVEQRDSMPETSR. A compositionally biased stretch (basic and acidic residues) spans 10-20; that stretch reads EQRDSMPETSR. The tryptophyl-tyrosyl-methioninium (Trp-Tyr) (with M-240) cross-link spans 91 to 214; sequence WHAAGTYRTT…LGATVMGLIY (124 aa). The active-site Proton acceptor is the histidine 92. The tryptophyl-tyrosyl-methioninium (Tyr-Met) (with W-91) cross-link spans 214–240; it reads YVNPEGPESTPDPEWSAQRIRKSFGRM. A heme b-binding site is contributed by histidine 255.

The protein belongs to the peroxidase family. Peroxidase/catalase subfamily. As to quaternary structure, homodimer or homotetramer. It depends on heme b as a cofactor. Formation of the three residue Trp-Tyr-Met cross-link is important for the catalase, but not the peroxidase activity of the enzyme.

It carries out the reaction H2O2 + AH2 = A + 2 H2O. It catalyses the reaction 2 H2O2 = O2 + 2 H2O. Functionally, bifunctional enzyme with both catalase and broad-spectrum peroxidase activity. The chain is Catalase-peroxidase from Salinibacter ruber (strain DSM 13855 / M31).